Consider the following 417-residue polypeptide: Serine hydroxymethyltransferase (417 aa).

(6S)-5,6,7,8-tetrahydrofolate is bound by residues Leu-121 and 125–127 (GHL). N6-(pyridoxal phosphate)lysine is present on Lys-229. 355-357 (SPF) provides a ligand contact to (6S)-5,6,7,8-tetrahydrofolate.

It belongs to the SHMT family. Homodimer. The cofactor is pyridoxal 5'-phosphate.

The protein resides in the cytoplasm. The enzyme catalyses (6R)-5,10-methylene-5,6,7,8-tetrahydrofolate + glycine + H2O = (6S)-5,6,7,8-tetrahydrofolate + L-serine. The protein operates within one-carbon metabolism; tetrahydrofolate interconversion. It participates in amino-acid biosynthesis; glycine biosynthesis; glycine from L-serine: step 1/1. Functionally, catalyzes the reversible interconversion of serine and glycine with tetrahydrofolate (THF) serving as the one-carbon carrier. This reaction serves as the major source of one-carbon groups required for the biosynthesis of purines, thymidylate, methionine, and other important biomolecules. Also exhibits THF-independent aldolase activity toward beta-hydroxyamino acids, producing glycine and aldehydes, via a retro-aldol mechanism. This chain is Serine hydroxymethyltransferase, found in Shewanella frigidimarina (strain NCIMB 400).